A 168-amino-acid polypeptide reads, in one-letter code: Bifunctional protein PyrR (168 aa).

Substrate-binding positions include 36-37 (TG), Arg77, 94-102 (DDVLMSGRT), and Val151. Residues 90 to 102 (LVLIDDVLMSGRT) carry the PRPP-binding motif.

This sequence belongs to the purine/pyrimidine phosphoribosyltransferase family. PyrR subfamily.

It catalyses the reaction UMP + diphosphate = 5-phospho-alpha-D-ribose 1-diphosphate + uracil. Regulates the transcription of the pyrimidine nucleotide (pyr) operon in response to exogenous pyrimidines. Its function is as follows. Also displays a weak uracil phosphoribosyltransferase activity which is not physiologically significant. In Pseudomonas fluorescens, this protein is Bifunctional protein PyrR.